Consider the following 514-residue polypeptide: Uridylate cyclase (514 aa).

Guanylate cyclase domains lie at 49-190 and 286-428; these read VHMY…AKLA and VSLY…EKRQ. Residues tyrosine 52, arginine 105, phenylalanine 178, 184–188, and 291–296 contribute to the a ribonucleoside 5'-triphosphate site; these read NHAAK and DIDGFT. Aspartate 291, isoleucine 292, and aspartate 339 together coordinate Ca(2+). Aspartate 291 lines the Mn(2+) pocket. The disordered stretch occupies residues 495-514; that stretch reads IRADERQVQPHSRQKVDGSR. The segment covering 496–514 has biased composition (basic and acidic residues); it reads RADERQVQPHSRQKVDGSR.

Belongs to the adenylyl cyclase class-4/guanylyl cyclase family. Pyrimidine cyclase subfamily. In terms of assembly, monomer. The cofactor is a divalent metal cation.

It localises to the cytoplasm. The enzyme catalyses UTP = 3',5'-cyclic UMP + diphosphate. Its function is as follows. Pycsar (pyrimidine cyclase system for antiphage resistance) provides immunity against bacteriophage. The pyrimidine cyclase (PycC) synthesizes cyclic nucleotides in response to infection; these serve as specific second messenger signals. The signals activate the adjacent effector, leading to bacterial cell death and abortive phage infection. A clade A Pycsar system. Functionally, the pyrimidine cyclase gene of a two-gene Pycsar system, generates cyclic UMP (cUMP) from UTP, has little to no activity on ATP, CTP or GTP. Expression of this and adjacent effector PaPycTIR (AC P0DV41) probably confers resistance to bacteriophage. The genes are probably only expressed in response to bacteriophage infection. Does not have adenylyl or guanylyl cyclase activity. The chain is Uridylate cyclase from Pseudomonas aeruginosa.